The primary structure comprises 158 residues: NADH-quinone oxidoreductase subunit B (158 aa).

4 residues coordinate [4Fe-4S] cluster: cysteine 37, cysteine 38, cysteine 102, and cysteine 132.

The protein belongs to the complex I 20 kDa subunit family. As to quaternary structure, NDH-1 is composed of 14 different subunits. Subunits NuoB, C, D, E, F, and G constitute the peripheral sector of the complex. [4Fe-4S] cluster is required as a cofactor.

It is found in the cell inner membrane. The enzyme catalyses a quinone + NADH + 5 H(+)(in) = a quinol + NAD(+) + 4 H(+)(out). NDH-1 shuttles electrons from NADH, via FMN and iron-sulfur (Fe-S) centers, to quinones in the respiratory chain. Couples the redox reaction to proton translocation (for every two electrons transferred, four hydrogen ions are translocated across the cytoplasmic membrane), and thus conserves the redox energy in a proton gradient. The sequence is that of NADH-quinone oxidoreductase subunit B from Nitrosomonas europaea (strain ATCC 19718 / CIP 103999 / KCTC 2705 / NBRC 14298).